Here is a 561-residue protein sequence, read N- to C-terminus: Dihydroxy-acid dehydratase (561 aa).

Cysteine 51 serves as a coordination point for [2Fe-2S] cluster. A Mg(2+)-binding site is contributed by aspartate 83. Cysteine 124 contributes to the [2Fe-2S] cluster binding site. Aspartate 125 and lysine 126 together coordinate Mg(2+). Position 126 is an N6-carboxylysine (lysine 126). Cysteine 196 provides a ligand contact to [2Fe-2S] cluster. Residue glutamate 448 participates in Mg(2+) binding. Catalysis depends on serine 473, which acts as the Proton acceptor.

The protein belongs to the IlvD/Edd family. In terms of assembly, homodimer. [2Fe-2S] cluster serves as cofactor. Requires Mg(2+) as cofactor.

The enzyme catalyses (2R)-2,3-dihydroxy-3-methylbutanoate = 3-methyl-2-oxobutanoate + H2O. It catalyses the reaction (2R,3R)-2,3-dihydroxy-3-methylpentanoate = (S)-3-methyl-2-oxopentanoate + H2O. It participates in amino-acid biosynthesis; L-isoleucine biosynthesis; L-isoleucine from 2-oxobutanoate: step 3/4. The protein operates within amino-acid biosynthesis; L-valine biosynthesis; L-valine from pyruvate: step 3/4. Its function is as follows. Functions in the biosynthesis of branched-chain amino acids. Catalyzes the dehydration of (2R,3R)-2,3-dihydroxy-3-methylpentanoate (2,3-dihydroxy-3-methylvalerate) into 2-oxo-3-methylpentanoate (2-oxo-3-methylvalerate) and of (2R)-2,3-dihydroxy-3-methylbutanoate (2,3-dihydroxyisovalerate) into 2-oxo-3-methylbutanoate (2-oxoisovalerate), the penultimate precursor to L-isoleucine and L-valine, respectively. This is Dihydroxy-acid dehydratase from Sulfolobus acidocaldarius (strain ATCC 33909 / DSM 639 / JCM 8929 / NBRC 15157 / NCIMB 11770).